Reading from the N-terminus, the 390-residue chain is Phosphopentomutase (390 aa).

The Mn(2+) site is built by aspartate 11, aspartate 283, histidine 288, aspartate 324, histidine 325, and histidine 336.

Belongs to the phosphopentomutase family. The cofactor is Mn(2+).

Its subcellular location is the cytoplasm. The enzyme catalyses 2-deoxy-alpha-D-ribose 1-phosphate = 2-deoxy-D-ribose 5-phosphate. It catalyses the reaction alpha-D-ribose 1-phosphate = D-ribose 5-phosphate. The protein operates within carbohydrate degradation; 2-deoxy-D-ribose 1-phosphate degradation; D-glyceraldehyde 3-phosphate and acetaldehyde from 2-deoxy-alpha-D-ribose 1-phosphate: step 1/2. Its function is as follows. Isomerase that catalyzes the conversion of deoxy-ribose 1-phosphate (dRib-1-P) and ribose 1-phosphate (Rib-1-P) to deoxy-ribose 5-phosphate (dRib-5-P) and ribose 5-phosphate (Rib-5-P), respectively. This is Phosphopentomutase from Clostridium novyi (strain NT).